The chain runs to 143 residues: Peptide methionine sulfoxide reductase MsrB (143 aa).

The MsrB domain maps to 16–139; it reads DAELRRRLTP…NSAALNFESR (124 aa). Residues Cys55, Cys58, Cys104, and Cys107 each contribute to the Zn(2+) site. The Nucleophile role is filled by Cys128.

The protein belongs to the MsrB Met sulfoxide reductase family. Requires Zn(2+) as cofactor.

It catalyses the reaction L-methionyl-[protein] + [thioredoxin]-disulfide + H2O = L-methionyl-(R)-S-oxide-[protein] + [thioredoxin]-dithiol. The chain is Peptide methionine sulfoxide reductase MsrB from Burkholderia vietnamiensis (strain G4 / LMG 22486) (Burkholderia cepacia (strain R1808)).